Reading from the N-terminus, the 387-residue chain is Anhydro-N-acetylmuramic acid kinase (387 aa).

17 to 24 is an ATP binding site; it reads GTSMDGVD.

This sequence belongs to the anhydro-N-acetylmuramic acid kinase family.

The enzyme catalyses 1,6-anhydro-N-acetyl-beta-muramate + ATP + H2O = N-acetyl-D-muramate 6-phosphate + ADP + H(+). It participates in amino-sugar metabolism; 1,6-anhydro-N-acetylmuramate degradation. It functions in the pathway cell wall biogenesis; peptidoglycan recycling. In terms of biological role, catalyzes the specific phosphorylation of 1,6-anhydro-N-acetylmuramic acid (anhMurNAc) with the simultaneous cleavage of the 1,6-anhydro ring, generating MurNAc-6-P. Is required for the utilization of anhMurNAc either imported from the medium or derived from its own cell wall murein, and thus plays a role in cell wall recycling. The polypeptide is Anhydro-N-acetylmuramic acid kinase (Burkholderia pseudomallei (strain K96243)).